A 902-amino-acid polypeptide reads, in one-letter code: Magnesium-transporting ATPase, P-type 1 (902 aa).

The Cytoplasmic portion of the chain corresponds to 1-98; it reads MLKIITRQLF…KPSPWWVHLW (98 aa). The chain crosses the membrane as a helical span at residues 99–119; that stretch reads VCYRNPFNILLTILGGISYAT. A topological domain (extracellular) is located at residue E120. Residues 121–141 traverse the membrane as a helical segment; sequence DLFAAGVIALMVGISTLLNFV. Over 142–291 the chain is Cytoplasmic; it reads QEARSTKAAD…QNAFQKGISR (150 aa). Residues 292-312 form a helical membrane-spanning segment; that stretch reads VSMLLIRFMLVMAPVVLIING. Topologically, residues 313 to 321 are extracellular; it reads YTKGDWWEA. A helical transmembrane segment spans residues 322–339; the sequence is ALFALSVAVGLTPEMLPM. E335 lines the Mg(2+) pocket. At 340-699 the chain is on the cytoplasmic side; that stretch reads IVTSTLARGA…IEGRRTFSNM (360 aa). D377 acts as the 4-aspartylphosphate intermediate in catalysis. Positions 645, 649, and 713 each coordinate Mg(2+). The helical transmembrane segment at 700-719 threads the bilayer; the sequence is LKYIKMTASSNFGNVFSVLV. Residues 720-728 are Extracellular-facing; it reads ASAFLPFLP. A helical membrane pass occupies residues 729–748; sequence MLPLHLLIQNLLYDVSQVAI. Mg(2+)-binding residues include N738 and D742. The Cytoplasmic segment spans residues 749 to 770; sequence PFDNVDEEQIQKPQRWNPADLG. The chain crosses the membrane as a helical span at residues 771 to 794; sequence RFMVFFGPISSIFDILTFCLMWWV. Residues 795–803 lie on the Extracellular side of the membrane; the sequence is FHANTPETQ. Residues 804 to 822 traverse the membrane as a helical segment; sequence TLFQSGWFVVGLLSQTLIV. Residues 823–835 lie on the Cytoplasmic side of the membrane; it reads HMIRTRRLPFIQS. Residues 836–855 traverse the membrane as a helical segment; that stretch reads RAAWPLMAMTLLVMVVGVSL. Topologically, residues 856–870 are extracellular; sequence PFSPLASYLQLQALP. The chain crosses the membrane as a helical span at residues 871 to 890; sequence LSYFPWLIAILVGYMTLTQL. The Cytoplasmic segment spans residues 891-902; that stretch reads VKGFYSRRYGWQ.

This sequence belongs to the cation transport ATPase (P-type) (TC 3.A.3) family. Type IIIB subfamily.

It is found in the cell inner membrane. It catalyses the reaction Mg(2+)(out) + ATP + H2O = Mg(2+)(in) + ADP + phosphate + H(+). Its function is as follows. Mediates magnesium influx to the cytosol. The protein is Magnesium-transporting ATPase, P-type 1 (mgtA) of Salmonella typhimurium (strain 14028s / SGSC 2262).